Reading from the N-terminus, the 174-residue chain is NADH-ubiquinone oxidoreductase chain 6 (174 aa).

The next 4 helical transmembrane spans lie at 24–44 (LALG…TGLM), 53–73 (ILFL…TSLA), 82–102 (MKLT…SFIM), and 143–163 (FITI…VKIT).

It belongs to the complex I subunit 6 family.

Its subcellular location is the mitochondrion membrane. The catalysed reaction is a ubiquinone + NADH + 5 H(+)(in) = a ubiquinol + NAD(+) + 4 H(+)(out). In terms of biological role, core subunit of the mitochondrial membrane respiratory chain NADH dehydrogenase (Complex I) that is believed to belong to the minimal assembly required for catalysis. Complex I functions in the transfer of electrons from NADH to the respiratory chain. The immediate electron acceptor for the enzyme is believed to be ubiquinone. This is NADH-ubiquinone oxidoreductase chain 6 (mt:ND6) from Drosophila melanogaster (Fruit fly).